A 349-amino-acid chain; its full sequence is Anaerobic nitrite reductase Glb1-3 (349 aa).

Globin domains follow at residues 13–162 (GFTE…AEMK) and 184–333 (CFTE…AEMK). 12 residues coordinate heme b: Ser-56, Lys-70, His-74, Lys-104, Thr-108, His-109, Ser-227, Lys-241, His-245, Lys-275, Thr-279, and His-280.

This sequence belongs to the plant globin family. In terms of assembly, monomer. Heme b is required as a cofactor.

It is found in the cytoplasm. Its subcellular location is the nucleus. The catalysed reaction is Fe(III)-heme b-[protein] + nitric oxide + H2O = Fe(II)-heme b-[protein] + nitrite + 2 H(+). In terms of biological role, phytoglobin that regulates the fine tuning of nitric oxide (NO) concentration in the cytosol in response to sudden changes in O(2) availability, and performs both symbiotic and nonsymbiotic functions. Exhibits NO dioxygenase activity in the presence of O(2) but nitrite reductase (NiR) activity in the absence of O(2) (e.g. during flooding or in waterlogged soil). May not function as an oxygen storage or transport protein. Extremely reactive toward the physiological ligands O(2), nitric oxide (NO), and nitrite with a very high affinity for O(2) through an hexacoordinate heme iron because of a very low dissociation constant. The chain is Anaerobic nitrite reductase Glb1-3 from Medicago truncatula (Barrel medic).